The following is a 510-amino-acid chain: NAD(P)H-quinone oxidoreductase subunit 2 A, chloroplastic (510 aa).

13 helical membrane passes run 24–44 (LLLFHGSFIFPECILIFGLIL), 57–77 (IPWLYFISSTSLVMSIAALLF), 99–119 (IFQFLILLCSTLCIPLSVEYI), 124–144 (MAITEFLLFVLTATLGGMFLC), 149–169 (LITIFVAPECFSLCSYLLSGY), 183–203 (YLLMGGASSSILVHGFSWLYG), 227–247 (PGISIALIFITVGIGFKLSLA), 295–315 (WHLLLEILAILSMILGNLIAI), 323–343 (MLAYSSIGQIGYVIIGIIVGD), 354–374 (YMLFYISMNLGTFACIVSFGL), 395–415 (ALSLALCLLSLGGLPPLAGFF), 418–438 (LHLFWCGWQAGLYFLVSIGLL), and 484–504 (MIVCVIASTIPGISMNPIIAI).

It belongs to the complex I subunit 2 family. NDH is composed of at least 16 different subunits, 5 of which are encoded in the nucleus.

It localises to the plastid. Its subcellular location is the chloroplast thylakoid membrane. The catalysed reaction is a plastoquinone + NADH + (n+1) H(+)(in) = a plastoquinol + NAD(+) + n H(+)(out). It carries out the reaction a plastoquinone + NADPH + (n+1) H(+)(in) = a plastoquinol + NADP(+) + n H(+)(out). Its function is as follows. NDH shuttles electrons from NAD(P)H:plastoquinone, via FMN and iron-sulfur (Fe-S) centers, to quinones in the photosynthetic chain and possibly in a chloroplast respiratory chain. The immediate electron acceptor for the enzyme in this species is believed to be plastoquinone. Couples the redox reaction to proton translocation, and thus conserves the redox energy in a proton gradient. This Ranunculus macranthus (Large buttercup) protein is NAD(P)H-quinone oxidoreductase subunit 2 A, chloroplastic.